A 632-amino-acid chain; its full sequence is Myrcene synthase TPS3FN, chloroplastic (632 aa).

A chloroplast-targeting transit peptide spans 1–55; that stretch reads MHCMAVHQFSPSIVSSLPTISTYNNNHFCRFFTPKTSISPISKTKSKSSTCYPIQ. (2E)-geranyl diphosphate is bound by residues R343, D380, D384, R524, and D527. Mg(2+) contacts are provided by D380 and D384. The short motif at 380–384 is the DDXXD motif element; sequence DDIYD. The Mg(2+) site is built by D527, T531, and E535.

Belongs to the terpene synthase family. Tpsb subfamily. Requires Mg(2+) as cofactor. Mn(2+) is required as a cofactor. As to expression, expressed in glandular trichomes two to four weeks after flowering onset.

Its subcellular location is the plastid. The protein localises to the chloroplast. It carries out the reaction (2E)-geranyl diphosphate = beta-myrcene + diphosphate. It participates in secondary metabolite biosynthesis; terpenoid biosynthesis. In terms of biological role, involved in monoterpene (C10) olefins biosynthesis, constituants of cannabinoids and terpenoids-rich resins. Catalyzes strictly the conversion of (2E)-geranyl diphosphate to beta-myrcene. The sequence is that of Myrcene synthase TPS3FN, chloroplastic from Cannabis sativa (Hemp).